We begin with the raw amino-acid sequence, 196 residues long: Pyridoxal 5'-phosphate synthase subunit PdxT (196 aa).

L-glutamine is bound at residue 52 to 54; sequence GES. Cys84 acts as the Nucleophile in catalysis. L-glutamine is bound by residues Arg113 and 141–142; that span reads IR. Active-site charge relay system residues include His178 and Glu180.

It belongs to the glutaminase PdxT/SNO family. In terms of assembly, in the presence of PdxS, forms a dodecamer of heterodimers. Only shows activity in the heterodimer.

It carries out the reaction aldehydo-D-ribose 5-phosphate + D-glyceraldehyde 3-phosphate + L-glutamine = pyridoxal 5'-phosphate + L-glutamate + phosphate + 3 H2O + H(+). It catalyses the reaction L-glutamine + H2O = L-glutamate + NH4(+). It participates in cofactor biosynthesis; pyridoxal 5'-phosphate biosynthesis. In terms of biological role, catalyzes the hydrolysis of glutamine to glutamate and ammonia as part of the biosynthesis of pyridoxal 5'-phosphate. The resulting ammonia molecule is channeled to the active site of PdxS. In Pyrococcus horikoshii (strain ATCC 700860 / DSM 12428 / JCM 9974 / NBRC 100139 / OT-3), this protein is Pyridoxal 5'-phosphate synthase subunit PdxT.